The primary structure comprises 695 residues: Frizzled and smoothened-like protein O (695 aa).

The N-terminal stretch at 1–23 (MKKLNYLLIVSFIFILNLLISKS) is a signal peptide. At 24–233 (QVLIDVTAKC…KEYKTKFYSE (210 aa)) the chain is on the extracellular side. Residues 28–173 (DVTAKCELID…ANEEIQCSGP (146 aa)) form the FZ domain. 5 cysteine pairs are disulfide-bonded: Cys33-Cys96, Cys42-Cys89, Cys80-Cys125, Cys114-Cys170, and Cys118-Cys138. Asn47 is a glycosylation site (N-linked (GlcNAc...) asparagine). N-linked (GlcNAc...) asparagine glycosylation is found at Asn137 and Asn178. The helical transmembrane segment at 234-254 (AILFSFSTACSFYLIFTFGVF) threads the bilayer. The Cytoplasmic portion of the chain corresponds to 255 to 262 (PNKYTNRN). Residues 263–283 (WIIVYLGITAICLAISYAVQE) form a helical membrane-spanning segment. The Extracellular segment spans residues 284 to 307 (ARYGGGDWRCTSDPGRYKSSEDGT). A helical transmembrane segment spans residues 308–328 (CILGGFFFQIGGLGTILFLSL). Over 329-343 (YSFDMFLTMNMMTNK) the chain is Cytoplasmic. Residues 344–364 (YFIQTSVGMWALIIFYALLPI) form a helical membrane-spanning segment. Topologically, residues 365–387 (KHYESSIASAGCWLSNEDNMFWQ) are extracellular. The chain crosses the membrane as a helical span at residues 388–408 (YFCFYVPSYVATFFLGVFIIT). The Cytoplasmic segment spans residues 409–435 (SIYKVFKMTVMFKSIKDKRILLLNIRS). Residues 436-456 (IIFLIAIMFCVSFSTMYPLYV) form a helical membrane-spanning segment. Residues 457-500 (TYNGDDFSKSVEVYVTCLYANIPNGNEVCPQIVFPQFSLRYMNA) are Extracellular-facing. Residues 501-521 (ITMAIIGIVGLIGLGIDPHIL) form a helical membrane-spanning segment. Residues 522-695 (QIYRESIRFK…NIERINSDNV (174 aa)) lie on the Cytoplasmic side of the membrane. The span at 545–556 (SPQPLKQGSTTD) shows a compositional bias: polar residues. A disordered region spans residues 545-695 (SPQPLKQGST…NIERINSDNV (151 aa)). Low complexity predominate over residues 593-608 (NLSASSESSNNLLNQS). Over residues 609–625 (TPGNLNINESISSIDTS) the composition is skewed to polar residues. Over residues 626–686 (NNNNNNNNNN…NNNNNNNNNN (61 aa)) the composition is skewed to low complexity. Residues 653–691 (NNNNNNNNNNNNNNNNNNNNYSNNNNNNNNNNNNIERIN) are a coiled coil.

Belongs to the G-protein coupled receptor Fz/Smo family.

It localises to the membrane. The chain is Frizzled and smoothened-like protein O (fslO) from Dictyostelium discoideum (Social amoeba).